The primary structure comprises 680 residues: Fermitin family homolog 2 (680 aa).

The segment at 40 to 81 (HIGGVMLKLVEKLDVKKDWSDHALWWEKKRTWLLKTHWTLDK) is interaction with membranes containing phosphatidylinositol phosphate. The interval 141–165 (LKKPRDPTKKKKKKLDDQSEDEALE) is disordered. Phosphoserine is present on residues Ser159, Ser181, Ser339, and Ser351. The FERM domain maps to 189–661 (MTPTYDAHDG…GYIFLSTRAK (473 aa)). The region spanning 380 to 476 (KVFKPKKLTL…WMAACRLASK (97 aa)) is the PH domain. Residue Lys383 coordinates a 1,2-diacyl-sn-glycero-3-phospho-(1D-myo-inositol-3,4,5-trisphosphate). Phosphoserine is present on Ser666.

The protein belongs to the kindlin family. Interacts with ILK. Interacts with FBLIM1. Interacts with ITGB1 and ITGB3. Interacts with active, unphosphorylated CTNNB1. Identified in a complex with CTNNB1 and TCF7L2/TCF4. Interacts with ITGB1; the interaction is inhibited in presence of ITGB1BP1. Ubiquitous. Found in numerous tumor tissues.

The protein localises to the cytoplasm. The protein resides in the cell cortex. It is found in the cytoskeleton. Its subcellular location is the stress fiber. It localises to the cell junction. The protein localises to the focal adhesion. The protein resides in the membrane. It is found in the cell projection. Its subcellular location is the lamellipodium membrane. It localises to the nucleus. The protein localises to the myofibril. The protein resides in the sarcomere. It is found in the i band. Its subcellular location is the cell surface. Functionally, scaffolding protein that enhances integrin activation mediated by TLN1 and/or TLN2, but activates integrins only weakly by itself. Binds to membranes enriched in phosphoinositides. Enhances integrin-mediated cell adhesion onto the extracellular matrix and cell spreading; this requires both its ability to interact with integrins and with phospholipid membranes. Required for the assembly of focal adhesions. Participates in the connection between extracellular matrix adhesion sites and the actin cytoskeleton and also in the orchestration of actin assembly and cell shape modulation. Recruits FBLIM1 to focal adhesions. Plays a role in the TGFB1 and integrin signaling pathways. Stabilizes active CTNNB1 and plays a role in the regulation of transcription mediated by CTNNB1 and TCF7L2/TCF4 and in Wnt signaling. This chain is Fermitin family homolog 2 (FERMT2), found in Homo sapiens (Human).